A 186-amino-acid polypeptide reads, in one-letter code: MTDCSRCAGTNASGPNYWSERIRDIVDFPKPGIVFKDITPLLSDGPDFASALDEMAQPWRTTPLDAVLGIEALGFILGAALARELRTGFVPVRKPGKLPGRTLIREYALEYGTDRIEMHEGALPRGARVLIVDDVLATGGTLRAALGLAAQLELEIVGAAVLVELLALQGRQKWADDVPLLATLSF.

The protein belongs to the purine/pyrimidine phosphoribosyltransferase family. As to quaternary structure, homodimer.

The protein localises to the cytoplasm. It carries out the reaction AMP + diphosphate = 5-phospho-alpha-D-ribose 1-diphosphate + adenine. It functions in the pathway purine metabolism; AMP biosynthesis via salvage pathway; AMP from adenine: step 1/1. Catalyzes a salvage reaction resulting in the formation of AMP, that is energically less costly than de novo synthesis. In Xanthomonas oryzae pv. oryzae (strain PXO99A), this protein is Adenine phosphoribosyltransferase.